The primary structure comprises 424 residues: UPF0597 protein Sputcn32_1209 (424 aa).

It belongs to the UPF0597 family.

This is UPF0597 protein Sputcn32_1209 from Shewanella putrefaciens (strain CN-32 / ATCC BAA-453).